The sequence spans 447 residues: 1-aminocyclopropane-1-carboxylate synthase 7 (447 aa).

Substrate is bound by residues Glu61 and Tyr100. Residue Lys285 is modified to N6-(pyridoxal phosphate)lysine.

It belongs to the class-I pyridoxal-phosphate-dependent aminotransferase family. Homodimer and heterodimer. In vivo, the relevance of heterodimerization with other ACS enzymes is however unsure. Interacts with XBAT32. Pyridoxal 5'-phosphate is required as a cofactor. In terms of processing, ubiquitinated by XBAT32. Ubiquitination probably leads to its subsequent degradation, thus controlling ethylene production. As to expression, expressed in roots.

It catalyses the reaction S-adenosyl-L-methionine = 1-aminocyclopropane-1-carboxylate + S-methyl-5'-thioadenosine + H(+). It participates in alkene biosynthesis; ethylene biosynthesis via S-adenosyl-L-methionine; ethylene from S-adenosyl-L-methionine: step 1/2. In terms of biological role, 1-aminocyclopropane-1-carboxylate synthase (ACS) enzymes catalyze the conversion of S-adenosyl-L-methionine (SAM) into 1-aminocyclopropane-1-carboxylate (ACC), a direct precursor of ethylene. The sequence is that of 1-aminocyclopropane-1-carboxylate synthase 7 (ACS7) from Arabidopsis thaliana (Mouse-ear cress).